The chain runs to 195 residues: Transcriptional regulator LdrP (195 aa).

Residues 110 to 182 (GELRARIARY…YRRVYLLDLA (73 aa)) form the HTH crp-type domain. The H-T-H motif DNA-binding region spans 142-161 (HEEIADATASIRESVSKVLA).

In terms of biological role, activates transcription. Positively regulates PcrtB promoter upstream of the crtB operon in a cAMP-independent manner. Regulated genes include genes encoding DNA photolyase, phytoene synthase and cytochrome P450 monooxygenase, which are involved in carotenoid biosynthesis. Positively regulates the light-inducible gene cluster in the megaplasmid in a cAMP-independent manner. The chain is Transcriptional regulator LdrP from Thermus thermophilus (strain ATCC BAA-163 / DSM 7039 / HB27).